The following is a 398-amino-acid chain: Ethanolaminephosphotransferase 1 (398 aa).

Ala-2 is modified (N-acetylalanine). The next 10 membrane-spanning stretches (helical) occupy residues 47–69 (WLAP…LLLT), 84–103 (HVPD…AYTL), 123–145 (LFDH…SIFG), 150–172 (GVSV…LSHW), 179–201 (VLFL…IVTA), 221–243 (LFTA…LNFF), 256–278 (VYEA…VWIL), 291–310 (IFYF…LIVC), 319–341 (TLNW…AATS), and 345–367 (SALL…VQVV). Position 388 (Sec-388) is a non-standard amino acid, selenocysteine.

It belongs to the CDP-alcohol phosphatidyltransferase class-I family. Mg(2+) serves as cofactor. Mn(2+) is required as a cofactor.

It localises to the endoplasmic reticulum membrane. The enzyme catalyses CDP-ethanolamine + a 1,2-diacyl-sn-glycerol = a 1,2-diacyl-sn-glycero-3-phosphoethanolamine + CMP + H(+). It catalyses the reaction 1-O-alkyl-2-acyl-sn-glycerol + CDP-ethanolamine = a 1-O-alkyl-2-acyl-sn-glycero-3-phosphoethanolamine + CMP + H(+). Its pathway is phospholipid metabolism; phosphatidylethanolamine biosynthesis; phosphatidylethanolamine from ethanolamine: step 3/3. Ethanolaminephosphotransferase that catalyzes the transfer of phosphoethanolamine (PE) from CDP-ethanolamine to lipid acceptors, the final step in the synthesis of PE via the 'Kennedy' pathway. PE is the second most abundant phospholipid of membranes in mammals and is involved in various membrane-related cellular processes. The enzyme is critical for the synthesis of several PE species and also catalyzes the synthesis of plasmanyl-PE, a lipid required for proper myelination and neurodevelopment, from 1-alkyl-2-acylglycerol. This is Ethanolaminephosphotransferase 1 from Mus musculus (Mouse).